The primary structure comprises 358 residues: 3'(2'),5'-bisphosphate nucleotidase (358 aa).

Aspartate 52 serves as the catalytic Proton acceptor. Mg(2+)-binding residues include glutamate 78, aspartate 140, isoleucine 142, and aspartate 143. Residue threonine 145 is the Proton acceptor of the active site. The adenosine 3',5'-bisphosphate site is built by threonine 145, histidine 239, serine 263, lysine 266, arginine 280, and aspartate 292. Histidine 239, serine 263, lysine 266, arginine 280, and aspartate 292 together coordinate AMP. Aspartate 292 provides a ligand contact to Mg(2+).

This sequence belongs to the inositol monophosphatase superfamily. Mg(2+) is required as a cofactor. Is constitutively transcribed in both roots and shoots.

The enzyme catalyses 3'-phosphoadenylyl sulfate + H2O = adenosine 5'-phosphosulfate + phosphate. It catalyses the reaction adenosine 3',5'-bisphosphate + H2O = AMP + phosphate. It carries out the reaction adenosine 2',5'-bisphosphate + H2O = AMP + phosphate. With respect to regulation, inhibited by Ca(2+), Li(+), and Na(+) and activated by K(+). Phosphatase that converts adenosine 3'-phosphate 5'-phosphosulfate (PAPS) to adenosine 5'-phosphosulfate (APS) and 3'(2')-phosphoadenosine 5'-phosphate (PAP) to AMP. May regulate the flux of sulfur in the sulfur-activation pathway by converting PAPS to APS. Shows no activity on myo-inositol 1-phosphate, beta-glycerol phosphate, NADPH, NADP and 5'-AMP. This Oryza sativa (Rice) protein is 3'(2'),5'-bisphosphate nucleotidase.